The following is a 502-amino-acid chain: Type II secretion system protein E (502 aa).

263 to 270 (GPTGSGKT) is a binding site for ATP. Residues Cys396, Cys399, Cys429, and Cys432 each coordinate Zn(2+). The disordered stretch occupies residues 461-480 (SSEQEMTRHARTSGPSIRDD).

It belongs to the GSP E family. In terms of assembly, homodimer. Dimerization is directed by a relatively short domain near the extreme N-terminus and is essential for extracellular protein secretion. May form homooligomers. Interacts with XcpY/GspL. Forms an inner membrane platform subcomplex with XcpS/GspF, XcpY/GspL and XcpZ/GspM. Zn(2+) serves as cofactor.

It localises to the cell inner membrane. It catalyses the reaction ATP + H2O + cellular proteinSide 1 = ADP + phosphate + cellular proteinSide 2.. Its function is as follows. ATPase component of the type II secretion system required for the energy-dependent secretion of extracellular factors such as proteases and toxins from the periplasm. Acts as a molecular motor to provide the energy that is required for assembly of the pseudopilus and the extrusion of substrates generated in the cytoplasm. This Pseudomonas aeruginosa (strain ATCC 15692 / DSM 22644 / CIP 104116 / JCM 14847 / LMG 12228 / 1C / PRS 101 / PAO1) protein is Type II secretion system protein E (xcpR).